Here is a 56-residue protein sequence, read N- to C-terminus: Large ribosomal subunit protein bL33 (56 aa).

Residues 1–12 show a composition bias toward basic and acidic residues; it reads MASKGGREKIKL. The tract at residues 1–27 is disordered; sequence MASKGGREKIKLESTAGTGHFYTTNKN.

Belongs to the bacterial ribosomal protein bL33 family.

This is Large ribosomal subunit protein bL33 from Leptothrix cholodnii (strain ATCC 51168 / LMG 8142 / SP-6) (Leptothrix discophora (strain SP-6)).